The following is a 194-amino-acid chain: Probable thymidylate kinase (194 aa).

9 to 16 (GIDGVGKS) serves as a coordination point for ATP.

Belongs to the thymidylate kinase family.

It carries out the reaction dTMP + ATP = dTDP + ADP. This Methanopyrus kandleri (strain AV19 / DSM 6324 / JCM 9639 / NBRC 100938) protein is Probable thymidylate kinase.